Consider the following 168-residue polypeptide: Diphosphoinositol polyphosphate phosphohydrolase 1 (168 aa).

Residue M1 is modified to N-acetylmethionine. Substrate contacts are provided by residues R10, 18 to 20, and 39 to 41; these read KKR and SSR. The 126-residue stretch at 17–142 folds into the Nudix hydrolase domain; it reads YKKRAACLCF…KPVQASYFEA (126 aa). Residues G50 and E66 each contribute to the Mg(2+) site. The Nudix box signature appears at 51–72; the sequence is GGMEPEEEPSVAAVREVCEEAG. The Proton acceptor role is filled by E69. E70 serves as a coordination point for Mg(2+). Residues 89–91, R115, and K133 each bind substrate; that span reads RKH.

It belongs to the Nudix hydrolase family. DIPP subfamily. In terms of assembly, monomer. Mg(2+) serves as cofactor. The cofactor is Mn(2+). Requires Zn(2+) as cofactor.

Its subcellular location is the cytoplasm. It localises to the nucleus. It carries out the reaction diphospho-myo-inositol polyphosphate + H2O = myo-inositol polyphosphate + phosphate.. It catalyses the reaction 5-diphospho-1D-myo-inositol 1,2,3,4,6-pentakisphosphate + H2O = 1D-myo-inositol hexakisphosphate + phosphate + H(+). The catalysed reaction is 3,5-bis(diphospho)-1D-myo-inositol 1,2,4,6-tetrakisphosphate + H2O = 3-diphospho-1D-myo-inositol 1,2,4,5,6-pentakisphosphate + phosphate + 2 H(+). The enzyme catalyses [phosphate](n+1) + n H2O = (n+1) phosphate + n H(+). It carries out the reaction P(1),P(5)-bis(5'-adenosyl) pentaphosphate + H2O = ADP + ATP + 2 H(+). It catalyses the reaction P(1),P(6)-bis(5'-adenosyl) hexaphosphate + H2O = 2 ATP + 2 H(+). The catalysed reaction is P(1),P(4)-bis(5'-adenosyl) tetraphosphate + H2O = AMP + ATP + 2 H(+). The enzyme catalyses a 5'-end (N(7)-methyl 5'-triphosphoguanosine)-ribonucleoside in mRNA + H2O = N(7)-methyl-GMP + a 5'-end diphospho-ribonucleoside in mRNA + 2 H(+). It carries out the reaction a 5'-end (N(7)-methyl 5'-triphosphoguanosine)-ribonucleoside in mRNA + H2O = N(7)-methyl-GDP + a 5'-end phospho-ribonucleoside in mRNA + 2 H(+). Its activity is regulated as follows. Diphosphoinositol polyphosphate phosphohydrolase is inhibited by fluoride and InsP6. Cleaves a beta-phosphate from the diphosphate groups in PP-InsP5 (diphosphoinositol pentakisphosphate) and [PP]2-InsP4 (bisdiphosphoinositol tetrakisphosphate), suggesting that it may play a role in signal transduction. InsP6 (inositol hexakisphosphate) is not a substrate. Acts as a negative regulator of the ERK1/2 pathway. Also able to catalyze the hydrolysis of dinucleoside oligophosphates, with diadenosine 5',5'''-P1,P6-hexaphosphate (Ap6A) and diadenosine 5',5'''- P1,P5-pentaphosphate (Ap5A) being the preferred substrates. The major reaction products are ADP and p4a from Ap6A and ADP and ATP from Ap5A. Also able to hydrolyze 5- phosphoribose 1-diphosphate. Acts as a decapping enzyme that can hydrolyze both monomethylated and unmethylated capped RNAs. Hydrolyzes monomethylated capped RNA after both the alpha- and beta-phosphates generating m7GMP + ppRNA and m7GDP + pRNA. Modulates the stability of a subset of mRNAs implicated in cell motility. Divalent cations zinc, magnesium and manganese determine its substrate specificity. Exhibits endopolyphosphatase activity in the presence of zinc ions. Exhibits diphosphoinositol polyphosphate phosphohydrolase in the presence of magnesium ions and diadenosine hexaphosphate hydrolase activity in the presence of manganese ions. Plays an important role in limiting DNA damage and maintaining cell survival upon oxidative stress via its endopolyphosphatase activity. In Rattus norvegicus (Rat), this protein is Diphosphoinositol polyphosphate phosphohydrolase 1.